A 341-amino-acid chain; its full sequence is Glyceraldehyde-3-phosphate dehydrogenase 2 (341 aa).

Residues arginine 12–isoleucine 13, arginine 78, and threonine 120 each bind NAD(+). Residues serine 152–threonine 154 and threonine 183 each bind D-glyceraldehyde 3-phosphate. Residue cysteine 153 is the Nucleophile of the active site. Asparagine 184 is an NAD(+) binding site. D-glyceraldehyde 3-phosphate contacts are provided by residues arginine 198, threonine 211–glycine 212, and arginine 234. Asparagine 313 contributes to the NAD(+) binding site.

The protein belongs to the glyceraldehyde-3-phosphate dehydrogenase family. Homotetramer.

The protein localises to the cytoplasm. It carries out the reaction D-glyceraldehyde 3-phosphate + phosphate + NAD(+) = (2R)-3-phospho-glyceroyl phosphate + NADH + H(+). The protein operates within carbohydrate degradation; glycolysis; pyruvate from D-glyceraldehyde 3-phosphate: step 1/5. Functionally, catalyzes the oxidative phosphorylation of glyceraldehyde 3-phosphate (G3P) to 1,3-bisphosphoglycerate (BPG) using the cofactor NAD. The first reaction step involves the formation of a hemiacetal intermediate between G3P and a cysteine residue, and this hemiacetal intermediate is then oxidized to a thioester, with concomitant reduction of NAD to NADH. The reduced NADH is then exchanged with the second NAD, and the thioester is attacked by a nucleophilic inorganic phosphate to produce BPG. This Staphylococcus aureus (strain COL) protein is Glyceraldehyde-3-phosphate dehydrogenase 2 (gapA2).